The primary structure comprises 121 residues: Small ribosomal subunit protein uS13 (121 aa).

The disordered stretch occupies residues 92 to 121 (RKGLPCRGQRTRTNARTRKGPRKAAQSLKK).

The protein belongs to the universal ribosomal protein uS13 family. As to quaternary structure, part of the 30S ribosomal subunit. Forms a loose heterodimer with protein S19. Forms two bridges to the 50S subunit in the 70S ribosome.

In terms of biological role, located at the top of the head of the 30S subunit, it contacts several helices of the 16S rRNA. In the 70S ribosome it contacts the 23S rRNA (bridge B1a) and protein L5 of the 50S subunit (bridge B1b), connecting the 2 subunits; these bridges are implicated in subunit movement. Contacts the tRNAs in the A and P-sites. The polypeptide is Small ribosomal subunit protein uS13 (Janthinobacterium sp. (strain Marseille) (Minibacterium massiliensis)).